The chain runs to 253 residues: Rab GTPase-activating protein 1-like, isoform 10 (253 aa).

Positions 8–222 (SMTFEERENR…MNEIQAAKNS (215 aa)) form a coiled coil. A disordered region spans residues 233-253 (TATGTQPLQPAPVTQPPKEST).

The protein is Rab GTPase-activating protein 1-like, isoform 10 (RABGAP1L) of Homo sapiens (Human).